The primary structure comprises 194 residues: GTP cyclohydrolase 1 (194 aa).

Residues cysteine 83, histidine 86, and cysteine 155 each coordinate Zn(2+).

This sequence belongs to the GTP cyclohydrolase I family. In terms of assembly, toroid-shaped homodecamer, composed of two pentamers of five dimers.

The catalysed reaction is GTP + H2O = 7,8-dihydroneopterin 3'-triphosphate + formate + H(+). The protein operates within cofactor biosynthesis; 7,8-dihydroneopterin triphosphate biosynthesis; 7,8-dihydroneopterin triphosphate from GTP: step 1/1. This is GTP cyclohydrolase 1 from Streptococcus pyogenes serotype M3 (strain ATCC BAA-595 / MGAS315).